Reading from the N-terminus, the 430-residue chain is Dynactin subunit 2 (430 aa).

Disordered stretches follow at residues 1–51 (MSEG…IDRS) and 201–228 (SLSS…SSSS). A compositionally biased stretch (polar residues) spans 32–44 (SISNLADESSELV). Coiled coils occupy residues 241 to 319 (TGEQ…QDET) and 397 to 430 (DDSF…QQQQ).

This sequence belongs to the dynactin subunit 2 family. In terms of assembly, subunit of dynactin, a multiprotein complex associated with dynein.

The protein resides in the cytoplasm. It localises to the cytoskeleton. Its subcellular location is the membrane. Modulates cytoplasmic dynein binding to an organelle, and plays a role in prometaphase chromosome alignment and spindle organization during mitosis. The chain is Dynactin subunit 2 (dynB) from Dictyostelium discoideum (Social amoeba).